We begin with the raw amino-acid sequence, 573 residues long: Urease subunit alpha (573 aa).

The Urease domain occupies 136–573 (GGIDCHVHFI…LPMAQRYFLF (438 aa)). 3 residues coordinate Ni(2+): His-141, His-143, and Lys-224. An N6-carboxylysine modification is found at Lys-224. His-226 lines the substrate pocket. His-253 and His-279 together coordinate Ni(2+). His-327 serves as the catalytic Proton donor. Asp-367 is a Ni(2+) binding site.

The protein belongs to the metallo-dependent hydrolases superfamily. Urease alpha subunit family. In terms of assembly, heterotrimer of UreA (gamma), UreB (beta) and UreC (alpha) subunits. Three heterotrimers associate to form the active enzyme. Ni cation serves as cofactor. Carboxylation allows a single lysine to coordinate two nickel ions.

It is found in the cytoplasm. The enzyme catalyses urea + 2 H2O + H(+) = hydrogencarbonate + 2 NH4(+). Its pathway is nitrogen metabolism; urea degradation; CO(2) and NH(3) from urea (urease route): step 1/1. This is Urease subunit alpha from Rhodococcus opacus (strain B4).